The chain runs to 775 residues: 5-methyltetrahydropteroyltriglutamate--homocysteine methyltransferase (775 aa).

Residues 16 to 19 and Lys115 contribute to the 5-methyltetrahydropteroyltri-L-glutamate site; that span reads REMK. Residues 435 to 437 and Glu488 each bind L-homocysteine; that span reads IGS. L-methionine-binding positions include 435–437 and Glu488; that span reads IGS. 5-methyltetrahydropteroyltri-L-glutamate is bound by residues 519-520 and Trp565; that span reads RC. Residue Asp603 coordinates L-homocysteine. Asp603 contributes to the L-methionine binding site. Glu609 lines the 5-methyltetrahydropteroyltri-L-glutamate pocket. His645, Cys647, and Glu669 together coordinate Zn(2+). The active-site Proton donor is His698. Cys730 lines the Zn(2+) pocket.

It belongs to the vitamin-B12 independent methionine synthase family. Requires Zn(2+) as cofactor.

It carries out the reaction 5-methyltetrahydropteroyltri-L-glutamate + L-homocysteine = tetrahydropteroyltri-L-glutamate + L-methionine. The protein operates within amino-acid biosynthesis; L-methionine biosynthesis via de novo pathway; L-methionine from L-homocysteine (MetE route): step 1/1. Catalyzes the transfer of a methyl group from 5-methyltetrahydrofolate to homocysteine resulting in methionine formation. The polypeptide is 5-methyltetrahydropteroyltriglutamate--homocysteine methyltransferase (Coxiella burnetii (strain CbuK_Q154) (Coxiella burnetii (strain Q154))).